Reading from the N-terminus, the 482-residue chain is Exodeoxyribonuclease I (482 aa).

The 182-residue stretch at 13 to 194 (LFYDYETFGI…TSDVYATIEL (182 aa)) folds into the Exonuclease domain. Positions 16, 18, and 187 each coordinate Mg(2+). Residue E18 participates in substrate binding. The ExoI SH3-like domain maps to 203 to 351 (PKLFDFFFKY…LVKNVLLKKN (149 aa)). The ExoI C-terminal domain maps to 355–471 (NSLNVDLQIY…DLLKYVFKKY (117 aa)).

In terms of assembly, monomer. Interacts with ssb (via C-terminus); this interaction stimulates the exonuclease activity by recruiting the enzyme to its substrate. Mg(2+) serves as cofactor.

The enzyme catalyses Exonucleolytic cleavage in the 3'- to 5'-direction to yield nucleoside 5'-phosphates.. Its function is as follows. Degrades single-stranded DNA (ssDNA) in a highly processive manner. Also functions as a DNA deoxyribophosphodiesterase that releases deoxyribose-phosphate moieties following the cleavage of DNA at an apurinic/apyrimidinic (AP) site by either an AP endonuclease or AP lyase. The chain is Exodeoxyribonuclease I (sbcB) from Buchnera aphidicola subsp. Schizaphis graminum (strain Sg).